The primary structure comprises 305 residues: Cytochrome c biogenesis protein CcsA (305 aa).

8 helical membrane passes run Val4 to Trp24, Ser32 to Leu52, Gly58 to Leu78, Ile91 to Leu111, Val136 to Val156, Thr212 to Asn232, Thr246 to Leu263, and Val275 to Ile295.

This sequence belongs to the CcmF/CycK/Ccl1/NrfE/CcsA family. May interact with ccs1.

The protein resides in the cellular thylakoid membrane. Functionally, required during biogenesis of c-type cytochromes (cytochrome c6 and cytochrome f) at the step of heme attachment. This chain is Cytochrome c biogenesis protein CcsA, found in Synechococcus sp. (strain CC9311).